Reading from the N-terminus, the 122-residue chain is Large ribosomal subunit protein uL14 (122 aa).

It belongs to the universal ribosomal protein uL14 family. Part of the 50S ribosomal subunit. Forms a cluster with proteins L3 and L19. In the 70S ribosome, L14 and L19 interact and together make contacts with the 16S rRNA in bridges B5 and B8.

Binds to 23S rRNA. Forms part of two intersubunit bridges in the 70S ribosome. This chain is Large ribosomal subunit protein uL14, found in Spiroplasma citri.